Consider the following 307-residue polypeptide: 4-diphosphocytidyl-2-C-methyl-D-erythritol kinase (307 aa).

Residue Lys-9 is part of the active site. An ATP-binding site is contributed by 94–104 (PIGAGLAGGSS). Residue Asp-136 is part of the active site.

The protein belongs to the GHMP kinase family. IspE subfamily.

It catalyses the reaction 4-CDP-2-C-methyl-D-erythritol + ATP = 4-CDP-2-C-methyl-D-erythritol 2-phosphate + ADP + H(+). The protein operates within isoprenoid biosynthesis; isopentenyl diphosphate biosynthesis via DXP pathway; isopentenyl diphosphate from 1-deoxy-D-xylulose 5-phosphate: step 3/6. Functionally, catalyzes the phosphorylation of the position 2 hydroxy group of 4-diphosphocytidyl-2C-methyl-D-erythritol. The polypeptide is 4-diphosphocytidyl-2-C-methyl-D-erythritol kinase (Synechococcus sp. (strain CC9605)).